A 243-amino-acid polypeptide reads, in one-letter code: Protein IN2-1 homolog A (243 aa).

Positions 31–112 (GTTRLYICYF…YIDSHFEGPA (82 aa)) constitute a GST N-terminal domain. Glutathione-binding positions include Lys70, Val84, and 96–97 (ES). Positions 117–240 (DPEKRQFADE…YLLDLAKTHL (124 aa)) constitute a GST C-terminal domain.

Belongs to the GST superfamily. HSP26 family.

The chain is Protein IN2-1 homolog A from Oryza sativa subsp. japonica (Rice).